Here is a 420-residue protein sequence, read N- to C-terminus: Dynein axonemal assembly factor 4 (420 aa).

In terms of domain architecture, CS spans 3 to 87; it reads VRVSEFSWQQ…KEPVLWDSLS (85 aa). Positions 7 to 103 are mediates interaction with ESR1 and STUB1; it reads EFSWQQTPAT…EMMQRIREKS (97 aa). Positions 164–192 are enriched in basic and acidic residues; it reads ECQKKADGQKRVQRKEKPLEGKQAEETKA. Positions 164 to 212 are disordered; the sequence is ECQKKADGQKRVQRKEKPLEGKQAEETKALKPRGLPRKAPPTRLPTRGR. TPR repeat units lie at residues 288 to 321, 322 to 355, and 364 to 397; these read PDWLKDKGNKLFATENYLAAVDAYNLAIRLNCKI, PLLYLNRAACHLKLKNLHKAIEDSSKALELLTPP, and MKAHVRRGTAFCQLELYVEGLQDYEAALKIDPAN.

Interacts with ZMYND10. Interacts with ESR1 and ESR2. Interacts with STUB1. Interacts with DNAAF2. Interacts with CCT3, CCT4, CCT5 and CCT8. Interacts with DNAAF6/PIH1D3.

Its subcellular location is the nucleus. The protein localises to the cytoplasm. It localises to the dynein axonemal particle. The protein resides in the cell projection. It is found in the neuron projection. Involved in neuronal migration during development of the cerebral neocortex. May regulate the stability and proteasomal degradation of the estrogen receptors that play an important role in neuronal differentiation, survival and plasticity. Axonemal dynein assembly factor required for ciliary motility. The chain is Dynein axonemal assembly factor 4 from Mus musculus (Mouse).